The chain runs to 294 residues: Acetyl-coenzyme A carboxylase carboxyl transferase subunit beta (294 aa).

In terms of domain architecture, CoA carboxyltransferase N-terminal spans 30 to 294 (IMTKCPECKK…PGVGGEVDGE (265 aa)). Zn(2+)-binding residues include Cys-34, Cys-37, Cys-53, and Cys-56. The C4-type zinc-finger motif lies at 34 to 56 (CPECKKIMYTKELQKNLMVCNYC).

It belongs to the AccD/PCCB family. Acetyl-CoA carboxylase is a heterohexamer composed of biotin carboxyl carrier protein (AccB), biotin carboxylase (AccC) and two subunits each of ACCase subunit alpha (AccA) and ACCase subunit beta (AccD). Requires Zn(2+) as cofactor.

Its subcellular location is the cytoplasm. The catalysed reaction is N(6)-carboxybiotinyl-L-lysyl-[protein] + acetyl-CoA = N(6)-biotinyl-L-lysyl-[protein] + malonyl-CoA. It participates in lipid metabolism; malonyl-CoA biosynthesis; malonyl-CoA from acetyl-CoA: step 1/1. Component of the acetyl coenzyme A carboxylase (ACC) complex. Biotin carboxylase (BC) catalyzes the carboxylation of biotin on its carrier protein (BCCP) and then the CO(2) group is transferred by the transcarboxylase to acetyl-CoA to form malonyl-CoA. The protein is Acetyl-coenzyme A carboxylase carboxyl transferase subunit beta of Listeria monocytogenes serovar 1/2a (strain ATCC BAA-679 / EGD-e).